Here is a 622-residue protein sequence, read N- to C-terminus: Elongation factor 4 (622 aa).

One can recognise a tr-type G domain in the interval glutamate 17 to valine 198. GTP contacts are provided by residues aspartate 29–threonine 34 and asparagine 145–aspartate 148.

It belongs to the TRAFAC class translation factor GTPase superfamily. Classic translation factor GTPase family. LepA subfamily.

It is found in the cell membrane. It catalyses the reaction GTP + H2O = GDP + phosphate + H(+). Its function is as follows. Required for accurate and efficient protein synthesis under certain stress conditions. May act as a fidelity factor of the translation reaction, by catalyzing a one-codon backward translocation of tRNAs on improperly translocated ribosomes. Back-translocation proceeds from a post-translocation (POST) complex to a pre-translocation (PRE) complex, thus giving elongation factor G a second chance to translocate the tRNAs correctly. Binds to ribosomes in a GTP-dependent manner. In Kineococcus radiotolerans (strain ATCC BAA-149 / DSM 14245 / SRS30216), this protein is Elongation factor 4.